Here is a 294-residue protein sequence, read N- to C-terminus: Elongation factor Ts (294 aa).

Residues threonine 81–valine 84 are involved in Mg(2+) ion dislocation from EF-Tu.

It belongs to the EF-Ts family.

The protein resides in the cytoplasm. In terms of biological role, associates with the EF-Tu.GDP complex and induces the exchange of GDP to GTP. It remains bound to the aminoacyl-tRNA.EF-Tu.GTP complex up to the GTP hydrolysis stage on the ribosome. The protein is Elongation factor Ts (tsf) of Mycoplasmopsis pulmonis (strain UAB CTIP) (Mycoplasma pulmonis).